The chain runs to 53 residues: MLHYAIVFFVIAIIAAVFGFTGIAAGAAEIAKILFYIFLVVFVVTLLLGVFRT.

2 consecutive transmembrane segments (helical) span residues 5–25 and 30–50; these read AIVF…GIAA and IAKI…LLGV.

Belongs to the UPF0391 family.

Its subcellular location is the cell membrane. This chain is UPF0391 membrane protein Bxeno_A2958, found in Paraburkholderia xenovorans (strain LB400).